The following is a 289-amino-acid chain: Aquaporin-2 (289 aa).

The disordered stretch occupies residues 1 to 36 (MSNESNDLEKNISHLDPTGVDNAYIPPEQPETKHSR). The Cytoplasmic portion of the chain corresponds to 1–47 (MSNESNDLEKNISHLDPTGVDNAYIPPEQPETKHSRFNIDRDTLRNH). Residues 48-68 (FIAAVGEFCGTFMFLWCAYVI) form a helical membrane-spanning segment. The Extracellular portion of the chain corresponds to 69 to 90 (CNVANHDVALTTEPEGSHPGQL). The helical transmembrane segment at 91 to 111 (IMIALGFGFSVMFSIWCFAGV) threads the bilayer. At 112–135 (SGGALNPAVSLSLCLARAISPARC) the chain is on the cytoplasmic side. Residues 117-119 (NPA) carry the NPA 1 motif. Residues 136–156 (VVMWFPQIIAGMAAGGAASAM) form a helical membrane-spanning segment. Residues 157–175 (TPGKVLFTNALGLGCSRSR) lie on the Extracellular side of the membrane. A helical transmembrane segment spans residues 176–196 (GLFLEMFGTAVLCLTVLMTAV). The Cytoplasmic segment spans residues 197–202 (EKRETN). A helical membrane pass occupies residues 203-223 (FMAALPIGISLFMAHMALTGY). Over 224-247 (TGTGVNPARSLGAAVAARYFPHYH) the chain is Extracellular. Residues 229–231 (NPA) carry the NPA 2 motif. A helical transmembrane segment spans residues 248-268 (WIYWIGPLLGAFLAWSVWQLL). Over 269-289 (QILDYTTYVNAEKAAGQKKED) the chain is Cytoplasmic.

The protein belongs to the MIP/aquaporin (TC 1.A.8) family.

The protein resides in the endoplasmic reticulum membrane. It localises to the cell membrane. Its function is as follows. Water channel required to facilitate the transport of water across membranes. Involved in freeze tolerance, osmotolerance and cell flocculation in liquid cultures. Is non-functional in most laboratory strains. This chain is Aquaporin-2 (AQY2), found in Saccharomyces cerevisiae (Baker's yeast).